The primary structure comprises 363 residues: S-adenosylmethionine:tRNA ribosyltransferase-isomerase (363 aa).

The protein belongs to the QueA family. As to quaternary structure, monomer.

The protein localises to the cytoplasm. It catalyses the reaction 7-aminomethyl-7-carbaguanosine(34) in tRNA + S-adenosyl-L-methionine = epoxyqueuosine(34) in tRNA + adenine + L-methionine + 2 H(+). Its pathway is tRNA modification; tRNA-queuosine biosynthesis. Functionally, transfers and isomerizes the ribose moiety from AdoMet to the 7-aminomethyl group of 7-deazaguanine (preQ1-tRNA) to give epoxyqueuosine (oQ-tRNA). The protein is S-adenosylmethionine:tRNA ribosyltransferase-isomerase of Pasteurella multocida (strain Pm70).